Reading from the N-terminus, the 999-residue chain is Hypoxia up-regulated protein 1 (999 aa).

A signal peptide spans 1–32; that stretch reads MADKVRRQRPRRRVCWALVAVLLADLLALSDT. 3 N-linked (GlcNAc...) asparagine glycosylation sites follow: N155, N222, and N515. S567 bears the Phosphoserine mark. Residues 578–694 are disordered; that stretch reads GNTISSLFGG…KKQKPARKRR (117 aa). N-linked (GlcNAc...) asparagine glycosylation occurs at N596. 2 stretches are compositionally biased toward basic and acidic residues: residues 611–626 and 641–672; these read GSKD…KEEA and PKGD…KAEA. 3 N-linked (GlcNAc...) asparagine glycosylation sites follow: N830, N862, and N869. K883 is subject to N6-acetyllysine. Residues 909–999 form a disordered region; it reads AKFTKPRPRP…QKRPLKNDEL (91 aa). N-linked (GlcNAc...) asparagine glycans are attached at residues N922 and N931. The Prevents secretion from ER signature appears at 996 to 999; it reads NDEL.

Belongs to the heat shock protein 70 family. In terms of assembly, part of a large chaperone multiprotein complex comprising DNAJB11, HSP90B1, HSPA5, HYOU, PDIA2, PDIA4, PDIA6, PPIB, SDF2L1, UGGT1 and very small amounts of ERP29, but not, or at very low levels, CALR nor CANX. As to expression, highly expressed in tissues that contain well-developed endoplasmic reticulum and synthesize large amounts of secretory proteins. Highly expressed in liver and pancreas and lower expression in brain and kidney. Also expressed in macrophages within aortic atherosclerotic plaques, and in breast cancers.

The protein localises to the endoplasmic reticulum lumen. In terms of biological role, has a pivotal role in cytoprotective cellular mechanisms triggered by oxygen deprivation. Promotes HSPA5/BiP-mediated ATP nucleotide exchange and thereby activates the unfolded protein response (UPR) pathway in the presence of endoplasmic reticulum stress. May play a role as a molecular chaperone and participate in protein folding. The polypeptide is Hypoxia up-regulated protein 1 (HYOU1) (Homo sapiens (Human)).